The chain runs to 2292 residues: Protein Ycf2 (2292 aa).

1640–1647 serves as a coordination point for ATP; that stretch reads GSIGIGRS.

Belongs to the Ycf2 family.

The protein localises to the plastid. It localises to the chloroplast stroma. In terms of biological role, probable ATPase of unknown function. Its presence in a non-photosynthetic plant (Epifagus virginiana) and experiments in tobacco indicate that it has an essential function which is probably not related to photosynthesis. The chain is Protein Ycf2 from Liriodendron tulipifera (Tuliptree).